A 356-amino-acid chain; its full sequence is MEVGVFIPIGNNGWLISENSPQYQPSFDLNKEIAQRAEAHGLDFLLSMIKLRGFGGKTEFWEYNLESFTLMAGLASVTERIKLFATCATLLIPPAYAARMCNTIDSISHGRFGLNLITGWQRPEYSQMGMWPGDEHFARRYDMLSEYAHILRELWEKGESSFQGEFYQMEDCRVRPQPQGDMKLICAGSSDAGLAFSAKYADYAFCLGKGVNTPTAFAGNNERLAAATAKTGRDVSIYVLMMVIAAETDDEAMDKWMHYRAGVDEEAVAWLGNQGAADKTSDTTNVRQLAARESAVNLNMGTLVGSYENIARMLDEVATVPNTGGVLLVFDDFVAGVETFGTRIQPLMKTRQHTAG.

Residues 49–50 (IK), Asn-115, Glu-124, 140–141 (RY), and Ser-190 each bind FMN.

This sequence belongs to the NtaA/SnaA/DszA monooxygenase family. RutA subfamily.

The catalysed reaction is uracil + FMNH2 + NADH + O2 = (Z)-3-ureidoacrylate + FMN + NAD(+) + H2O + H(+). It carries out the reaction thymine + FMNH2 + NADH + O2 = (Z)-2-methylureidoacrylate + FMN + NAD(+) + H2O + H(+). Catalyzes the pyrimidine ring opening between N-3 and C-4 by an unusual flavin hydroperoxide-catalyzed mechanism, adding oxygen atoms in the process to yield ureidoacrylate peracid, that immediately reacts with FMN forming ureidoacrylate and FMN-N(5)-oxide. The FMN-N(5)-oxide reacts spontaneously with NADH to produce FMN. Requires the flavin reductase RutF to regenerate FMN in vivo. The protein is Pyrimidine monooxygenase RutA of Haliangium ochraceum (strain DSM 14365 / JCM 11303 / SMP-2).